The primary structure comprises 435 residues: Exodeoxyribonuclease 7 large subunit (435 aa).

Over residues 1–10 (MRGTRVTETA) the composition is skewed to polar residues. 2 disordered regions span residues 1 to 21 (MRGT…GPPT) and 413 to 435 (AGKA…PRGK).

The protein belongs to the XseA family. In terms of assembly, heterooligomer composed of large and small subunits.

It is found in the cytoplasm. It catalyses the reaction Exonucleolytic cleavage in either 5'- to 3'- or 3'- to 5'-direction to yield nucleoside 5'-phosphates.. Functionally, bidirectionally degrades single-stranded DNA into large acid-insoluble oligonucleotides, which are then degraded further into small acid-soluble oligonucleotides. This is Exodeoxyribonuclease 7 large subunit from Leifsonia xyli subsp. xyli (strain CTCB07).